A 674-amino-acid polypeptide reads, in one-letter code: Protein kinase C delta type (674 aa).

A C2 domain is found at 1-106; it reads MAPFLRISFN…KNNGKAEFWL (106 aa). 2 positions are modified to phosphothreonine: Thr43 and Thr50. Tyr64 bears the Phosphotyrosine mark. Ser130 carries the post-translational modification Phosphoserine. Phosphothreonine is present on Thr141. Tyr155 carries the phosphotyrosine modification. The segment at 158–208 adopts a Phorbol-ester/DAG-type 1 zinc-finger fold; the sequence is NHEFIATFFGQPTFCSVCKEFVWGLNKQGYKCRQCNAAIHKKCIDKIIGRC. Thr218 is subject to Phosphothreonine. The Phorbol-ester/DAG-type 2 zinc finger occupies 230 to 280; the sequence is PHRFKVYNYMSPTFCDHCGSLLWGLVKQGLKCEDCGMNVHHKCREKVANLC. Position 299 is a phosphoserine; by autocatalysis (Ser299). 2 positions are modified to phosphotyrosine; by SRC: Tyr311 and Tyr332. The Protein kinase domain occupies 347 to 601; sequence FTFQKVLGKG…TGNIRIHPFF (255 aa). 353–361 is a binding site for ATP; the sequence is LGKGSFGKV. Tyr372 carries the post-translational modification Phosphotyrosine. Lys376 is an ATP binding site. Thr449 is modified (phosphothreonine). Asp471 acts as the Proton acceptor in catalysis. At Ser504 the chain carries Phosphoserine. Residue Thr505 is modified to Phosphothreonine; by autocatalysis. The residue at position 565 (Tyr565) is a Phosphotyrosine. An AGC-kinase C-terminal domain is found at 602–673; sequence KTINWSLLEK…VNPKFEQFLD (72 aa). 3 positions are modified to phosphoserine: Ser643, Ser652, and Ser662.

Belongs to the protein kinase superfamily. AGC Ser/Thr protein kinase family. PKC subfamily. As to quaternary structure, interacts with PDPK1 (via N-terminal region). Interacts with RAD9A. Interacts with CDCP1. Interacts with MUC1. Interacts with VASP. Interacts with CAVIN3. Interacts with PRKD2 (via N-terminus and zing-finger domain 1 and 2) in response to oxidative stress; the interaction is independent of PRKD2 tyrosine phosphorylation. Interacts with PLSC3; interaction is enhanced by UV irradiation. In terms of processing, autophosphorylated and/or phosphorylated at Thr-505, within the activation loop; phosphorylation at Thr-505 is not a prerequisite for enzymatic activity. Autophosphorylated at Ser-299. Upon TNFSF10/TRAIL treatment, phosphorylated at Tyr-155; phosphorylation is required for its translocation to the endoplasmic reticulum and cleavage by caspase-3. Phosphorylated at Tyr-311, Tyr-332 and Tyr-565; phosphorylation of Tyr-311 and Tyr-565 following thrombin or zymosan stimulation potentiates its kinase activity. Phosphorylated by protein kinase PDPK1; phosphorylation is inhibited by the apoptotic C-terminal cleavage product of PKN2. Phosphorylated at Tyr-311 through a SYK and SRC mechanism downstream of C-type lectin receptors activation, promoting its activation. Proteolytically cleaved into a catalytic subunit and a regulatory subunit by caspase-3 during apoptosis which results in kinase activation. As to expression, isoform 1 is highly expressed in developing pro- and pre-B-cells and moderately in mature T-cells. Isoform 2 is highly expressed in testis and ovary and at a lower level in thymocytes, brain and kidney.

It is found in the cytoplasm. The protein resides in the perinuclear region. The protein localises to the nucleus. It localises to the cell membrane. Its subcellular location is the mitochondrion. It is found in the endomembrane system. The catalysed reaction is L-seryl-[protein] + ATP = O-phospho-L-seryl-[protein] + ADP + H(+). It catalyses the reaction L-threonyl-[protein] + ATP = O-phospho-L-threonyl-[protein] + ADP + H(+). It carries out the reaction L-tyrosyl-[protein] + ATP = O-phospho-L-tyrosyl-[protein] + ADP + H(+). With respect to regulation, novel PKCs (PRKCD, PRKCE, PRKCH and PRKCQ) are calcium-insensitive, but activated by diacylglycerol (DAG) and phosphatidylserine. Three specific sites; Thr-505 (activation loop of the kinase domain), Ser-643 (turn motif) and Ser-662 (hydrophobic region), need to be phosphorylated for its full activation. Activated by caspase-3 (CASP3) cleavage during apoptosis. After cleavage, the pseudosubstrate motif in the regulatory subunit is released from the substrate recognition site of the catalytic subunit, which enables PRKCD to become constitutively activated. The catalytic subunit which displays properties of a sphingosine-dependent protein kinase is activated by D-erythro-sphingosine (Sph) or N,N-dimethyl-D-erythrosphingosine (DMS) or N,N,N-trimethyl-D-erythrosphingosine (TMS), but not by ceramide or Sph-1-P and is strongly inhibited by phosphatidylserine. In terms of biological role, calcium-independent, phospholipid- and diacylglycerol (DAG)-dependent serine/threonine-protein kinase that plays contrasting roles in cell death and cell survival by functioning as a pro-apoptotic protein during DNA damage-induced apoptosis, but acting as an anti-apoptotic protein during cytokine receptor-initiated cell death, is involved in tumor suppression, is required for oxygen radical production by NADPH oxidase and acts as a positive or negative regulator in platelet functional responses. Negatively regulates B cell proliferation and also has an important function in self-antigen induced B cell tolerance induction. Upon DNA damage, activates the promoter of the death-promoting transcription factor BCLAF1/Btf to trigger BCLAF1-mediated p53/TP53 gene transcription and apoptosis. In response to oxidative stress, interact with and activate CHUK/IKKA in the nucleus, causing the phosphorylation of p53/TP53. In the case of ER stress or DNA damage-induced apoptosis, can form a complex with the tyrosine-protein kinase ABL1 which trigger apoptosis independently of p53/TP53. In cytosol can trigger apoptosis by activating MAPK11 or MAPK14, inhibiting AKT1 and decreasing the level of X-linked inhibitor of apoptosis protein (XIAP), whereas in nucleus induces apoptosis via the activation of MAPK8 or MAPK9. Upon ionizing radiation treatment, is required for the activation of the apoptosis regulators BAX and BAK, which trigger the mitochondrial cell death pathway. Can phosphorylate MCL1 and target it for degradation which is sufficient to trigger for BAX activation and apoptosis. Is required for the control of cell cycle progression both at G1/S and G2/M phases. Mediates phorbol 12-myristate 13-acetate (PMA)-induced inhibition of cell cycle progression at G1/S phase by up-regulating the CDK inhibitor CDKN1A/p21 and inhibiting the cyclin CCNA2 promoter activity. In response to UV irradiation can phosphorylate CDK1, which is important for the G2/M DNA damage checkpoint activation. Can protect glioma cells from the apoptosis induced by TNFSF10/TRAIL, probably by inducing increased phosphorylation and subsequent activation of AKT1. Can also act as tumor suppressor upon mitogenic stimulation with PMA or TPA. In N-formyl-methionyl-leucyl-phenylalanine (fMLP)-treated cells, is required for NCF1 (p47-phox) phosphorylation and activation of NADPH oxidase activity, and regulates TNF-elicited superoxide anion production in neutrophils, by direct phosphorylation and activation of NCF1 or indirectly through MAPK1/3 (ERK1/2) signaling pathways. Involved in antifungal immunity by mediating phosphorylation and activation of CARD9 downstream of C-type lectin receptors activation, promoting interaction between CARD9 and BCL10, followed by activation of NF-kappa-B and MAP kinase p38 pathways. May also play a role in the regulation of NADPH oxidase activity in eosinophil after stimulation with IL5, leukotriene B4 or PMA. In collagen-induced platelet aggregation, acts a negative regulator of filopodia formation and actin polymerization by interacting with and negatively regulating VASP phosphorylation. Downstream of PAR1, PAR4 and CD36/GP4 receptors, regulates differentially platelet dense granule secretion; acts as a positive regulator in PAR-mediated granule secretion, whereas it negatively regulates CD36/GP4-mediated granule release. Phosphorylates MUC1 in the C-terminal and regulates the interaction between MUC1 and beta-catenin. The catalytic subunit phosphorylates 14-3-3 proteins (YWHAB, YWHAZ and YWHAH) in a sphingosine-dependent fashion. Phosphorylates ELAVL1 in response to angiotensin-2 treatment. Phosphorylates mitochondrial phospholipid scramblase 3 (PLSCR3), resulting in increased cardiolipin expression on the mitochondrial outer membrane which facilitates apoptosis. Phosphorylates SMPD1 which induces SMPD1 secretion. The sequence is that of Protein kinase C delta type from Mus musculus (Mouse).